The chain runs to 320 residues: ATP-dependent 6-phosphofructokinase (320 aa).

Residue glycine 12 coordinates ATP. ADP is bound by residues 22 to 26 and 55 to 60; these read RGVVR and RYSVSD. Residues 73-74 and 103-106 each bind ATP; these read RF and GDGS. Aspartate 104 lines the Mg(2+) pocket. 126-128 lines the substrate pocket; that stretch reads TID. The Proton acceptor role is filled by aspartate 128. Arginine 155 lines the ADP pocket. Substrate-binding positions include arginine 163 and 170 to 172; that span reads MGR. Residues 186–188, lysine 212, and 214–216 contribute to the ADP site; these read GCE and KKH. Substrate-binding positions include glutamate 223, arginine 244, and 250-253; that span reads HIQR.

This sequence belongs to the phosphofructokinase type A (PFKA) family. ATP-dependent PFK group I subfamily. Prokaryotic clade 'B1' sub-subfamily. As to quaternary structure, homotetramer. Mg(2+) serves as cofactor.

The protein resides in the cytoplasm. The enzyme catalyses beta-D-fructose 6-phosphate + ATP = beta-D-fructose 1,6-bisphosphate + ADP + H(+). The protein operates within carbohydrate degradation; glycolysis; D-glyceraldehyde 3-phosphate and glycerone phosphate from D-glucose: step 3/4. Its activity is regulated as follows. Allosterically activated by ADP and other diphosphonucleosides, and allosterically inhibited by phosphoenolpyruvate. Functionally, catalyzes the phosphorylation of D-fructose 6-phosphate to fructose 1,6-bisphosphate by ATP, the first committing step of glycolysis. This is ATP-dependent 6-phosphofructokinase from Salmonella gallinarum (strain 287/91 / NCTC 13346).